The primary structure comprises 476 residues: Elongation factor Tu, chloroplastic (476 aa).

The N-terminal 67 residues, 1 to 67, are a transit peptide targeting the chloroplast; it reads MAISAPAACS…QSTRRSFTVR (67 aa). The tr-type G domain maps to 77–281; sequence KPHVNIGTIG…AVDDYIPIPQ (205 aa). Positions 86 to 93 are G1; sequence GHVDHGKT. 86 to 93 lines the GTP pocket; sequence GHVDHGKT. The residue at position 94 (T94) is a Phosphothreonine. A G2 region spans residues 127-131; sequence GITIN. Residues 148 to 151 are G3; the sequence is DCPG. Residues 148–152 and 203–206 contribute to the GTP site; these read DCPGH and NKED. The tract at residues 203 to 206 is G4; sequence NKED. Residues 241–243 are G5; it reads SAL.

The protein belongs to the TRAFAC class translation factor GTPase superfamily. Classic translation factor GTPase family. EF-Tu/EF-1A subfamily. In terms of assembly, interacts with PI5K2. Interacts with APD2.

It localises to the plastid. It is found in the chloroplast. Its function is as follows. This protein promotes the GTP-dependent binding of aminoacyl-tRNA to the A-site of ribosomes during protein biosynthesis. The sequence is that of Elongation factor Tu, chloroplastic (TUFA) from Arabidopsis thaliana (Mouse-ear cress).